A 63-amino-acid chain; its full sequence is Large ribosomal subunit protein uL29 (63 aa).

Belongs to the universal ribosomal protein uL29 family.

The sequence is that of Large ribosomal subunit protein uL29 from Aliarcobacter butzleri (strain RM4018) (Arcobacter butzleri).